Here is a 118-residue protein sequence, read N- to C-terminus: Large ribosomal subunit protein bL20 (118 aa).

This sequence belongs to the bacterial ribosomal protein bL20 family.

Its function is as follows. Binds directly to 23S ribosomal RNA and is necessary for the in vitro assembly process of the 50S ribosomal subunit. It is not involved in the protein synthesizing functions of that subunit. This is Large ribosomal subunit protein bL20 from Sodalis glossinidius (strain morsitans).